The following is a 246-amino-acid chain: Probable transcriptional regulatory protein YebC (246 aa).

Positions 1 to 20 are disordered; the sequence is MAGHSKWANTRHRKAAQDAK.

This sequence belongs to the TACO1 family.

The protein resides in the cytoplasm. The polypeptide is Probable transcriptional regulatory protein YebC (Shigella flexneri).